A 460-amino-acid polypeptide reads, in one-letter code: Angiopoietin-related protein 3 (460 aa).

Positions 1–16 are cleaved as a signal peptide; sequence MFTIKLLLFIVPLVIS. Residues 17 to 165 form a sufficient to inhibit LPL lipase activity region; the sequence is SRIDQDNSSF…PEHPEVTSLK (149 aa). The tract at residues 17–207 is sufficient to inhibit LIPG/EL phospholipase activity; it reads SRIDQDNSSF…EIENQLRRTS (191 aa). The interval 32–56 is required for inhibition of LPL lipase activity; the sequence is EPKSRFAMLDDVKILANGLLQLGHG. Positions 85-210 form a coiled coil; it reads LSLQTSEIKE…NQLRRTSIQE (126 aa). A glycan (N-linked (GlcNAc...) asparagine) is linked at Asn-115. Thr-226 carries an O-linked (GalNAc) threonine glycan. The 219-residue stretch at 237–455 folds into the Fibrinogen C-terminal domain; that stretch reads VKHDGIPAEC…STKMLIHPTD (219 aa). A disulfide bridge links Cys-246 with Cys-274. Asn-296 and Asn-357 each carry an N-linked (GlcNAc...) asparagine glycan. Cys-394 and Cys-408 are joined by a disulfide.

As to quaternary structure, interacts with ANGPTL8. Interacts with ITGB3. Post-translationally, O-glycosylated at Thr-226 by GALNT2; blocks processing and activation by proprotein convertases. In part proteolytically cleaved by proprotein convertases; proposed to be involved in activation. As to expression, expressed principally in liver. Weakly expressed in kidney. Binds to adipocytes. Increased expression and colocalization with activated ITGB3 in glomeruli of patients with nephrotic syndrome showing effaced podocyte foot processes (at protein level).

Its subcellular location is the secreted. It is found in the cell projection. The protein resides in the lamellipodium. Acts in part as a hepatokine that is involved in regulation of lipid and glucose metabolism. Proposed to play a role in the trafficking of energy substrates to either storage or oxidative tissues in response to food intake. Has a stimulatory effect on plasma triglycerides (TG), which is achieved by suppressing plasma TG clearance via inhibition of LPL activity. The inhibition of LPL activity appears to be an indirect mechanism involving recruitment of proprotein convertases PCSK6 and FURIN to LPL leading to cleavage and dissociation of LPL from the cell surface; the function does not require ANGPTL3 proteolytic cleavage but seems to be mediated by the N-terminal domain, and is not inhibited by GPIHBP1. Can inhibit endothelial lipase, causing increased plasma levels of high density lipoprotein (HDL) cholesterol and phospholipids. Can bind to adipocytes to activate lipolysis, releasing free fatty acids and glycerol. Suppresses LPL specifically in oxidative tissues which is required to route very low density lipoprotein (VLDL)-TG to white adipose tissue (WAT) for storage in response to food; the function may involve cooperation with circulating, liver-derived ANGPTL8 and ANGPTL4 expression in WAT. Contributes to lower plasma levels of low density lipoprotein (LDL)-cholesterol by a mechanism that is independent of the canonical pathway implicating APOE and LDLR. May stimulate hypothalamic LPL activity. In terms of biological role, in vitro inhibits LPL activity; not effective on GPIHBP1-stabilized LPL. Functionally, involved in angiogenesis. Binds to endothelial cells via integrin alpha-V/beta-3 (ITGAV:ITGB3), activates FAK, MAPK and Akt signaling pathways and induces cell adhesion and cell migration. Secreted from podocytes, may modulate properties of glomerular endothelial cells involving integrin alpha-V/beta-3 and Akt signaling. May increase the motility of podocytes. May induce actin filament rearrangements in podocytes implicating integrin alpha-V/beta-3 and Rac1 activation. Binds to hematopoietic stem cells (HSC) and is involved in the regulation of HSC activity probably implicating down-regulation of IKZF1/IKAROS. This is Angiopoietin-related protein 3 (ANGPTL3) from Homo sapiens (Human).